Here is a 137-residue protein sequence, read N- to C-terminus: Probable calcium-binding protein CML33 (137 aa).

EF-hand domains lie at 1–36 (MNNM…LSPS), 37–72 (IPSE…TAQS), 76–111 (DVEK…LGEK), and 112–137 (CTVE…FVGV). The Ca(2+) site is built by D14, S16, D18, K20, and E25. Ca(2+) is bound by residues D89, N91, D93, K95, and E100.

Potential calcium sensor. In Arabidopsis thaliana (Mouse-ear cress), this protein is Probable calcium-binding protein CML33 (CML33).